Here is a 485-residue protein sequence, read N- to C-terminus: Glutamyl-tRNA(Gln) amidotransferase subunit A (485 aa).

Active-site charge relay system residues include lysine 74 and serine 149. The Acyl-ester intermediate role is filled by serine 173.

It belongs to the amidase family. GatA subfamily. As to quaternary structure, heterotrimer of A, B and C subunits.

It carries out the reaction L-glutamyl-tRNA(Gln) + L-glutamine + ATP + H2O = L-glutaminyl-tRNA(Gln) + L-glutamate + ADP + phosphate + H(+). Its function is as follows. Allows the formation of correctly charged Gln-tRNA(Gln) through the transamidation of misacylated Glu-tRNA(Gln) in organisms which lack glutaminyl-tRNA synthetase. The reaction takes place in the presence of glutamine and ATP through an activated gamma-phospho-Glu-tRNA(Gln). The chain is Glutamyl-tRNA(Gln) amidotransferase subunit A from Herminiimonas arsenicoxydans.